The chain runs to 176 residues: Translation initiation factor IF-3 (176 aa).

The protein belongs to the IF-3 family. In terms of assembly, monomer.

The protein localises to the cytoplasm. IF-3 binds to the 30S ribosomal subunit and shifts the equilibrium between 70S ribosomes and their 50S and 30S subunits in favor of the free subunits, thus enhancing the availability of 30S subunits on which protein synthesis initiation begins. The sequence is that of Translation initiation factor IF-3 from Streptococcus agalactiae serotype Ia (strain ATCC 27591 / A909 / CDC SS700).